A 275-amino-acid polypeptide reads, in one-letter code: N-acetyltransferase YodP (275 aa).

Positions 125 to 271 constitute an N-acetyltransferase domain; that stretch reads FTMRKAETND…AEGLENMNIW (147 aa).

Belongs to the acetyltransferase family.

The catalysed reaction is (3S)-3,6-diaminohexanoate + acetyl-CoA = (3S)-6-acetamido-3-aminohexanoate + CoA + H(+). Functionally, in vitro, is able to catalyze the acetylation of beta-lysine to N6-acetyl-beta-lysine, an archaeal osmolyte produced by methanogenic archaea. Its physiological function has not yet been elucidated. The polypeptide is N-acetyltransferase YodP (yodP) (Bacillus subtilis (strain 168)).